We begin with the raw amino-acid sequence, 1214 residues long: Lysine-specific demethylase 3A (1214 aa).

Residues S150 and S209 each carry the phosphoserine modification. The span at 194–211 shows a compositional bias: polar residues; sequence TPSSNRQQNTPQAANSPP. Disordered regions lie at residues 194 to 215, 271 to 293, and 310 to 398; these read TPSSNRQQNTPQAANSPPNIGA, PKGSCIQPKTNTDQESRLESTPQ, and KAEL…KSVL. At S330 the chain carries Phosphoserine. Polar residues predominate over residues 361–370; the sequence is LGSQSQNLKE. Residues 371–380 show a composition bias toward basic and acidic residues; it reads TSVKVDHDSC. Residues 381 to 391 show a composition bias toward polar residues; it reads CTRSSNKTQTP. The C6-type zinc-finger motif lies at 546–571; that stretch reads CDVCDTTIFNLHWVCPRCGFGVCVDC. An LXXLL motif motif is present at residues 769–773; that stretch reads LRNLL. The residue at position 779 (K779) is an N6-acetyllysine. A JmjC domain is found at 944 to 1167; sequence MPSRFDDLMA…HCFWLTQEFR (224 aa). Fe cation-binding residues include H1006, D1008, and H1135.

Belongs to the JHDM2 histone demethylase family. Interacts with VRK1. The cofactor is Fe(2+). In terms of tissue distribution, testis specific. Expressed only in male germ cells.

The protein localises to the cytoplasm. It is found in the nucleus. It catalyses the reaction N(6),N(6)-dimethyl-L-lysyl(9)-[histone H3] + 2 2-oxoglutarate + 2 O2 = L-lysyl(9)-[histone H3] + 2 formaldehyde + 2 succinate + 2 CO2. Functionally, histone demethylase that specifically demethylates 'Lys-9' of histone H3, thereby playing a central role in histone code. Preferentially demethylates mono- and dimethylated H3 'Lys-9' residue, with a preference for dimethylated residue, while it has weak or no activity on trimethylated H3 'Lys-9'. Demethylation of Lys residue generates formaldehyde and succinate. Involved in hormone-dependent transcriptional activation, by participating in recruitment to androgen-receptor target genes, resulting in H3 'Lys-9' demethylation and transcriptional activation. Involved in spermatogenesis by regulating expression of target genes such as PRM1 and TNP1 which are required for packaging and condensation of sperm chromatin. Directly regulates expression of PPARA and UCP1 and is involved in obesity resistance. This chain is Lysine-specific demethylase 3A (Kdm3a), found in Rattus norvegicus (Rat).